The following is a 653-amino-acid chain: Threonine--tRNA ligase (653 aa).

In terms of domain architecture, TGS spans 1–61 (MIKITFPDGN…NEDAEVKLFK (61 aa)). Residues 243–542 (DHRKIGKELE…LIEHTAGKFP (300 aa)) are catalytic. Residues Cys-338, His-389, and His-519 each coordinate Zn(2+).

The protein belongs to the class-II aminoacyl-tRNA synthetase family. As to quaternary structure, homodimer. Zn(2+) is required as a cofactor.

It localises to the cytoplasm. It carries out the reaction tRNA(Thr) + L-threonine + ATP = L-threonyl-tRNA(Thr) + AMP + diphosphate + H(+). In terms of biological role, catalyzes the attachment of threonine to tRNA(Thr) in a two-step reaction: L-threonine is first activated by ATP to form Thr-AMP and then transferred to the acceptor end of tRNA(Thr). Also edits incorrectly charged L-seryl-tRNA(Thr). The polypeptide is Threonine--tRNA ligase (Porphyromonas gingivalis (strain ATCC BAA-308 / W83)).